The sequence spans 94 residues: Co-chaperonin GroES (94 aa).

In terms of assembly, heptamer of 7 subunits arranged in a ring. Interacts with the chaperonin GroEL.

It is found in the cytoplasm. In terms of biological role, together with the chaperonin GroEL, plays an essential role in assisting protein folding. The GroEL-GroES system forms a nano-cage that allows encapsulation of the non-native substrate proteins and provides a physical environment optimized to promote and accelerate protein folding. GroES binds to the apical surface of the GroEL ring, thereby capping the opening of the GroEL channel. The polypeptide is Co-chaperonin GroES (Thermoanaerobacter brockii (Thermoanaerobium brockii)).